Here is a 146-residue protein sequence, read N- to C-terminus: Hut operon positive regulatory protein (146 aa).

Belongs to the HutP family. Homohexamer.

Antiterminator that binds to cis-acting regulatory sequences on the mRNA in the presence of histidine, thereby suppressing transcription termination and activating the hut operon for histidine utilization. This is Hut operon positive regulatory protein from Bacillus anthracis (strain CDC 684 / NRRL 3495).